A 237-amino-acid chain; its full sequence is MGPVSARRSRLRPEISLILFQVGMVGACTVYVLQPGYLEVDYGSDAVTMECNFSTVGCPPVPPKSLWFRCGTHQPEALCLDGCRNEADKFTVKETLDPDQVFLTVNRLSPNDSAIYICGIAFPNELSPSAKHVGKGTTLVVRERLFSKEVRSFLIVLLALLSVYITGVCVTFIVLFKSKSNGPRSRETKGSKKKSARRIFQEIAQELYHKRYVETSHLPEQEGTDENRKALPNPGRA.

A signal peptide spans 1–27; sequence MGPVSARRSRLRPEISLILFQVGMVGA. Topologically, residues 28–152 are extracellular; the sequence is CTVYVLQPGY…ERLFSKEVRS (125 aa). The Ig-like C2-type domain maps to 30–134; the sequence is VYVLQPGYLE…ELSPSAKHVG (105 aa). An intrachain disulfide couples Cys51 to Cys118. The helical transmembrane segment at 153-173 threads the bilayer; that stretch reads FLIVLLALLSVYITGVCVTFI. Topologically, residues 174–237 are cytoplasmic; sequence VLFKSKSNGP…RKALPNPGRA (64 aa). A compositionally biased stretch (basic and acidic residues) spans 215–229; the sequence is TSHLPEQEGTDENRK. Residues 215-237 form a disordered region; sequence TSHLPEQEGTDENRKALPNPGRA.

Ubiquitous with higher expression in immune tissue.

It localises to the membrane. The protein is Immunoglobulin superfamily member 6 (Igsf6) of Mus musculus (Mouse).